We begin with the raw amino-acid sequence, 1068 residues long: Sucrose-phosphate synthase (1068 aa).

Disordered regions lie at residues 18-47 (HTSS…GAHM) and 118-139 (KEQE…SEGE). Residues 23–32 (GAGGGGGGGD) show a composition bias toward gly residues. The span at 118 to 128 (KEQEQVRREAT) shows a compositional bias: basic and acidic residues.

This sequence belongs to the glycosyltransferase 1 family. Homodimer or homotetramer.

It catalyses the reaction beta-D-fructose 6-phosphate + UDP-alpha-D-glucose = sucrose 6(F)-phosphate + UDP + H(+). It participates in glycan biosynthesis; sucrose biosynthesis; sucrose from D-fructose 6-phosphate and UDP-alpha-D-glucose: step 1/2. With respect to regulation, activity is regulated by phosphorylation and moderated by concentration of metabolites and light. Its function is as follows. Plays a role in photosynthetic sucrose synthesis by catalyzing the rate-limiting step of sucrose biosynthesis from UDP-glucose and fructose- 6-phosphate. Involved in the regulation of carbon partitioning in the leaves of plants. May regulate the synthesis of sucrose and therefore play a major role as a limiting factor in the export of photoassimilates out of the leaf. Plays a role for sucrose availability that is essential for plant growth and fiber elongation. This is Sucrose-phosphate synthase from Zea mays (Maize).